Consider the following 112-residue polypeptide: Nitrogen regulatory protein GlnK (112 aa).

Residue T29 coordinates ADP. G37 contributes to the ATP binding site. Position 38-39 (R38–Q39) interacts with ADP. Y51 carries the O-UMP-tyrosine modification. ADP-binding positions include A64, G87–K90, and R101–R103. ATP-binding positions include A64, G87 to K90, and R101 to R103.

The protein belongs to the P(II) protein family. As to quaternary structure, homotrimer. In response to elevation of the extracellular ammonium concentration, interacts and forms a complex with AmtB. Uridylylated/deuridylylated by GlnD. Fully uridylylated in nitrogen-limited conditions and deuridylylated when extracellular ammonium increases.

The protein resides in the cytoplasm. The protein localises to the cell inner membrane. Its activity is regulated as follows. Formation of the GlnK-AmtB complex is influenced by intracellular pools of the effector molecules ATP, ADP, Mg(2+) and 2-oxoglutarate. The GlnK-AmtB interaction is also controlled by the level of intracellular glutamine and the uridylylation status of GlnK. Its function is as follows. Involved in the regulation of nitrogen metabolism. Regulates the activity of its targets by protein-protein interaction in response to the nitrogen status of the cell. Involved in the regulation of the ammonium transporter AmtB so as to optimize ammonium uptake under all growth conditions. In nitrogen-limited conditions, GlnK does not interact with AmtB, which remains active and imports ammonium. When extracellular ammonium increases, GlnK associates tightly with AmtB in the inner membrane, thereby inhibiting the transporter activity. This is Nitrogen regulatory protein GlnK (glnK) from Escherichia coli O157:H7.